The primary structure comprises 747 residues: Zinc finger and BTB domain-containing protein 47 (747 aa).

A BTB domain is found at 15-83 (CDVDLVLVPQ…IYTSKLLVNA (69 aa)). Residue Lys-190 forms a Glycyl lysine isopeptide (Lys-Gly) (interchain with G-Cter in SUMO2) linkage. The tract at residues 243-424 (QTLHVSTGPE…ARGPPATDGL (182 aa)) is disordered. Residues 267-277 (GREDGLQRHSD) are compositionally biased toward basic and acidic residues. Acidic residues predominate over residues 278–354 (EEEEDDEEEE…SEEEEGEEGE (77 aa)). The span at 380–398 (RSRENARRRGTPEPEEAGR) shows a compositional bias: basic and acidic residues. A C2H2-type 1 zinc finger spans residues 436-459 (HPCQKCPRVFNNRWYLEKHMNVTH). A C2H2-type 2; degenerate zinc finger spans residues 463 to 485 (QICDQCGKRFLLESELLLHRQTD). 7 consecutive C2H2-type zinc fingers follow at residues 490-513 (IQCVTCGKAFKKLWSLHEHNKIVH), 520-542 (FSCEICEKKFYTMAHVRKHMVAH), 548-570 (FTCETCGKSFKRSMSLKVHSLQH), 576-598 (FRCENCNERFQYKYQLRSHMSIH), 604-626 (FMCQWCGKDFNMKQYFDEHMKTH), 632-654 (YICEICGKSFTSRPNMKRHRRTH), and 660-687 (YPCDVCGQRFRFSNMLKAHKEKCFRVSH). Residues 694-747 (VPAAPGLPPTQPQAHALPLLPGLPQTLPPPPHLPPPPPLFPTTASPGGRMNANN) form a disordered region. Pro residues predominate over residues 719-733 (TLPPPPHLPPPPPLF).

This sequence belongs to the krueppel C2H2-type zinc-finger protein family.

The protein resides in the nucleus. Functionally, may be involved in transcriptional regulation. In Homo sapiens (Human), this protein is Zinc finger and BTB domain-containing protein 47 (ZBTB47).